Consider the following 519-residue polypeptide: MPSTTLLFPQKHIRAIPGKIYAFFRELVSGVIISKPDLSHHYSCENATKEEGKDAADEEKTTTSLFPESNNIDRSLNGGCSVIPCSMDVSDLNTPISITLSPENRIKSEVNAKSLLGSRPEQDTGAPIKMSTGVTSSPLSPSGSTPEHSTKVLNNGEEEFICHYCDATFRIRGYLTRHIKKHAIEKAYHCPFFNSATPPDLRCHNSGGFSRRDTYKTHLKARHVLYPKGVKPQDRNKSSGHCAQCGEYFSTIENFVENHIESGDCKALPQGYTKKNEKRSGKLRKIKTSNGHSRFISTSQSVVEPKVLFNKDAVEAMTIVANNSSGNDIISKYGNNKLMLNSENFKVDIPKRKRKYIKKKQQQVSGSTVTTPEVATQNNQEVAPDEISSATIFSPFDTHLLEPVPSSSSESSAEVMFHGKQMKNFLIDINSFTNQQQQAQDNPSFLPLDIEQSSYDLSEDAMSYPIISTQSNRDCTQYDNTKISQILQSQLNPEYLSENHMRETQQYLNFYNDNFGSQF.

The segment at Ile16–Lys35 is i. A compositionally biased stretch (basic and acidic residues) spans Ala47 to Thr61. Disordered regions lie at residues Ala47–Ser69 and Leu115–Thr150. Positions Leu65–Ser97 are II. Residues Ser131–Pro146 show a composition bias toward low complexity. Residues Phe160–His182 form a C2H2-type 1 zinc finger. The C2H2-type 2; atypical zinc finger occupies Tyr188–His223. The segment at Gly240–Cys265 adopts a C2H2-type 3; atypical zinc-finger fold. The disordered stretch occupies residues Ile357–Val382. Positions Val364–Glu381 are enriched in polar residues.

Interacts (via Region II) with SSY5; protease component of the SPS-sensor. Post-translationally, phosphorylated by casein kinase I. Phosphorylation is not dependent on the extracellular amino acid levels, but is a prerequisite for proteolytic processing. In terms of processing, activated by the amino acid-induced proteolytic removal of an N-terminal inhibitory domain by serine protease SSY5, an intrinsic component of the SPS-sensor. Processing requires at least 2 components of the SCF(GRR1) ubiquitin ligase complex, namely the F-box protein GRR1 and the E2 enzyme CDC34, but does not depend on the proteasome. Processing is negatively regulated by the protein phosphatase 2A regulatory subunit RTS1.

It localises to the cell membrane. The protein resides in the nucleus. In terms of biological role, transcription factor involved in the regulation of gene expression in response to extracellular amino acid levels. Synthesized as latent cytoplasmic precursor, which, upon a signal initiated by the plasma membrane SPS (SSY1-PTR3-SSY5) amino acid sensor system, becomes proteolytically activated and relocates to the nucleus, where it induces the expression of SPS-sensor-regulated genes, including the amino-acid permeases AGP1, BAP2, BAP3 and GNP1. Binding to promoters is facilitated by DAL81. Involved in the repression of genes subject to nitrogen catabolite repression and genes involved in stress response. Negatively regulated by inner nuclear membrane proteins ASI1, ASI2 and ASI3, which prevent unprocessed precursor forms that escape cytoplasmic anchoring from inducing SPS-sensor-regulated genes. May be involved in pre-tRNA splicing. This chain is Transcription factor STP1 (STP1), found in Saccharomyces cerevisiae (strain RM11-1a) (Baker's yeast).